We begin with the raw amino-acid sequence, 104 residues long: MKRIVSGDQVKVISGNEAGKVGVVRKVLYSSVGRRKEVYVIVSDVNVRRFVKKTQAGKKFDAKSYPIAVSNVALLAGDGFVSKVGFKLKDGTKKRIFKRTAEFV.

The protein belongs to the universal ribosomal protein uL24 family. As to quaternary structure, part of the 50S ribosomal subunit.

In terms of biological role, one of two assembly initiator proteins, it binds directly to the 5'-end of the 23S rRNA, where it nucleates assembly of the 50S subunit. Functionally, one of the proteins that surrounds the polypeptide exit tunnel on the outside of the subunit. The sequence is that of Large ribosomal subunit protein uL24 from Neorickettsia sennetsu (strain ATCC VR-367 / Miyayama) (Ehrlichia sennetsu).